The sequence spans 245 residues: Nicotinamide/nicotinic acid mononucleotide adenylyltransferase 3 (245 aa).

NAD(+)-binding residues include Ser14 and Phe15. His22 and Lys56 together coordinate ATP. Residues Trp90, Thr93, Gly134, and Asp136 each coordinate NAD(+). ATP is bound at residue Lys139. Residues Leu146, Trp147, Arg166, and Asn197 each contribute to the NAD(+) site. Residue Thr202–Arg205 coordinates ATP.

The protein belongs to the eukaryotic NMN adenylyltransferase family. As to quaternary structure, homotetramer. Requires Mg(2+) as cofactor.

The protein resides in the mitochondrion. The catalysed reaction is beta-nicotinamide D-ribonucleotide + ATP + H(+) = diphosphate + NAD(+). The enzyme catalyses nicotinate beta-D-ribonucleotide + ATP + H(+) = deamido-NAD(+) + diphosphate. It participates in cofactor biosynthesis; NAD(+) biosynthesis; NAD(+) from nicotinamide D-ribonucleotide: step 1/1. It functions in the pathway cofactor biosynthesis; NAD(+) biosynthesis; deamido-NAD(+) from nicotinate D-ribonucleotide: step 1/1. Its activity is regulated as follows. Activity is strongly inhibited by galotannin. Inhibited by P1-(adenosine-5')-P4-(nicotinic-acid-riboside-5')-tetraphosphate (Nap4AD). In terms of biological role, catalyzes the formation of NAD(+) from nicotinamide mononucleotide (NMN) and ATP. Can also use the deamidated form; nicotinic acid mononucleotide (NaMN) as substrate with the same efficiency. Can use triazofurin monophosphate (TrMP) as substrate. Can also use GTP and ITP as nucleotide donors. Also catalyzes the reverse reaction, i.e. the pyrophosphorolytic cleavage of NAD(+). For the pyrophosphorolytic activity, can use NAD(+), NADH, NaAD, nicotinic acid adenine dinucleotide phosphate (NHD), nicotinamide guanine dinucleotide (NGD) as substrates. Fails to cleave phosphorylated dinucleotides NADP(+), NADPH and NaADP(+). Protects against axonal degeneration following injury. May be involved in the maintenance of axonal integrity. Also functions as a stress-response chaperone protein that prevents toxic aggregation of proteins; this function may be independent of its NAD(+) synthesis activity. This chain is Nicotinamide/nicotinic acid mononucleotide adenylyltransferase 3, found in Mus musculus (Mouse).